The primary structure comprises 638 residues: Zinc finger protein 143 (638 aa).

Met1 is subject to N-acetylmethionine. Lys213 participates in a covalent cross-link: Glycyl lysine isopeptide (Lys-Gly) (interchain with G-Cter in SUMO2). 4 C2H2-type zinc fingers span residues Phe237–His261, Tyr267–His291, Tyr297–His321, and Phe327–His351. Thr352 carries the phosphothreonine modification. 3 consecutive C2H2-type zinc fingers follow at residues Tyr357 to His381, Tyr387 to His411, and Tyr417 to His440. Lys406 participates in a covalent cross-link: Glycyl lysine isopeptide (Lys-Gly) (interchain with G-Cter in SUMO2).

It belongs to the GLI C2H2-type zinc-finger protein family. In terms of assembly, interacts with CHD8. Forms a complex with HCFC1 and ZNF143.

It localises to the nucleus. Functionally, transcriptional activator. In complex with HCFC1 and ZNF143, regulates the expression of several genes, including AP2S1, ESCO2, OPHN1, RBL1, UBXN8 and ZNF32. Activates the gene for selenocysteine tRNA (tRNAsec). Binds to the SPH motif of small nuclear RNA (snRNA) gene promoters. Participates in efficient U6 RNA polymerase III transcription via its interaction with CHD8. The chain is Zinc finger protein 143 (Znf143) from Rattus norvegicus (Rat).